The sequence spans 568 residues: Urease subunit alpha (568 aa).

In terms of domain architecture, Urease spans G133–L568. Ni(2+) contacts are provided by H138, H140, and K217. An N6-carboxylysine modification is found at K217. H219 lines the substrate pocket. The Ni(2+) site is built by H246 and H272. H320 serves as the catalytic Proton donor. Ni(2+) is bound at residue D360.

Belongs to the metallo-dependent hydrolases superfamily. Urease alpha subunit family. In terms of assembly, heterotrimer of UreA (gamma), UreB (beta) and UreC (alpha) subunits. Three heterotrimers associate to form the active enzyme. It depends on Ni cation as a cofactor. In terms of processing, carboxylation allows a single lysine to coordinate two nickel ions.

It is found in the cytoplasm. It carries out the reaction urea + 2 H2O + H(+) = hydrogencarbonate + 2 NH4(+). It functions in the pathway nitrogen metabolism; urea degradation; CO(2) and NH(3) from urea (urease route): step 1/1. The chain is Urease subunit alpha from Haloarcula marismortui (strain ATCC 43049 / DSM 3752 / JCM 8966 / VKM B-1809) (Halobacterium marismortui).